Consider the following 740-residue polypeptide: Ion-translocating oxidoreductase complex subunit C (740 aa).

2 4Fe-4S ferredoxin-type domains span residues 369-397 (GEPQ…QQLY) and 407-436 (KATT…VQYF). [4Fe-4S] cluster is bound by residues Cys-377, Cys-380, Cys-383, Cys-387, Cys-416, Cys-419, Cys-422, and Cys-426. 2 disordered regions span residues 571–590 (LEQQ…RKAA) and 602–716 (KLEQ…DPRK). 2 stretches are compositionally biased toward low complexity: residues 573–583 (QQQANAEPEQQ) and 637–647 (QQQANAEPEQQ).

Belongs to the 4Fe4S bacterial-type ferredoxin family. RnfC subfamily. As to quaternary structure, the complex is composed of six subunits: RsxA, RsxB, RsxC, RsxD, RsxE and RsxG. [4Fe-4S] cluster is required as a cofactor.

The protein resides in the cell inner membrane. Part of a membrane-bound complex that couples electron transfer with translocation of ions across the membrane. Required to maintain the reduced state of SoxR. Probably transfers electron from NAD(P)H to SoxR. The chain is Ion-translocating oxidoreductase complex subunit C from Escherichia coli (strain K12).